Consider the following 273-residue polypeptide: Putative pyruvate, phosphate dikinase regulatory protein (273 aa).

149–156 (GPSRTSKT) contributes to the ADP binding site.

This sequence belongs to the pyruvate, phosphate/water dikinase regulatory protein family. PDRP subfamily.

The enzyme catalyses N(tele)-phospho-L-histidyl/L-threonyl-[pyruvate, phosphate dikinase] + ADP = N(tele)-phospho-L-histidyl/O-phospho-L-threonyl-[pyruvate, phosphate dikinase] + AMP + H(+). The catalysed reaction is N(tele)-phospho-L-histidyl/O-phospho-L-threonyl-[pyruvate, phosphate dikinase] + phosphate + H(+) = N(tele)-phospho-L-histidyl/L-threonyl-[pyruvate, phosphate dikinase] + diphosphate. Bifunctional serine/threonine kinase and phosphorylase involved in the regulation of the pyruvate, phosphate dikinase (PPDK) by catalyzing its phosphorylation/dephosphorylation. This Rickettsia massiliae (strain Mtu5) protein is Putative pyruvate, phosphate dikinase regulatory protein.